The sequence spans 288 residues: MRGYLLLLPLLLCLVDNSVSYKPVILVHGLLSSSKSFDKLIQFIKKAHPGTDIYPVDMFNHLKSLNPMWKQVYEIRKYISPIIKNAGLKGVHLICYSQGGLICRGLLETMPEHNVDTFIALSSPLMGQYGMTLYVQKALPLVNISALQEVCYRKFFKEISICGYWRDPHRYEKYLEYSAFLPKLNNELLDSNSTERKRNFLRLRKLVLIGGPDDEVIAPWQSSHFGFYNEKEEVVNMKDQMVYQKDTFGLQSLDGRGAITIYSVPGVLHASWPNNQTVFKNYIEKWLT.

The N-terminal stretch at 1 to 20 (MRGYLLLLPLLLCLVDNSVS) is a signal peptide. Residues C95 and C103 are joined by a disulfide bond. S97 functions as the Nucleophile in the catalytic mechanism. An N-linked (GlcNAc...) asparagine glycan is attached at N143. A disulfide bond links C151 and C162. N192 is a glycosylation site (N-linked (GlcNAc...) asparagine). Residues D214 and H269 contribute to the active site. N-linked (GlcNAc...) asparagine glycosylation is present at N275.

The protein belongs to the palmitoyl-protein thioesterase family.

It is found in the lysosome. The enzyme catalyses hexadecanoyl-CoA + H2O = hexadecanoate + CoA + H(+). It catalyses the reaction S-hexadecanoyl-N-acetylcysteamine + H2O = N-acetylcysteamine + hexadecanoate + H(+). In terms of biological role, catalyzes the cleavage of thioester bonds from S-palmitoyl-CoA or S-palmitoyl-N-acetylcysteamine (unbranched structures) but does not have activity against palmitoylcysteine or palmitoylated proteins, branched structures or bulky head groups. Conversely, hydrolyzes both long and short chain fatty acyl-CoA substrate. The chain is Lysosomal thioesterase PPT2-B (ppt2-b) from Xenopus laevis (African clawed frog).